The sequence spans 141 residues: MNIALIAHDKKKELMVQFAIAYKFILSKHTLYATGTTGRLIQEATGLEVHRFLPGPLGGDQQIGSLIAYNQIDMVIFLRDPLTAQPHEPDVNALLRLCDVHNIPLATNIATAELLIKALDRGDLSWREIVNPKLQKNKSDK.

The region spanning 1–141 (MNIALIAHDK…PKLQKNKSDK (141 aa)) is the MGS-like domain. Substrate contacts are provided by residues His-8, Lys-12, and 34 to 37 (TGTT). Asp-60 functions as the Proton donor/acceptor in the catalytic mechanism. Residue His-87 participates in substrate binding.

It belongs to the methylglyoxal synthase family.

The enzyme catalyses dihydroxyacetone phosphate = methylglyoxal + phosphate. In terms of biological role, catalyzes the formation of methylglyoxal from dihydroxyacetone phosphate. This Caldicellulosiruptor bescii (strain ATCC BAA-1888 / DSM 6725 / KCTC 15123 / Z-1320) (Anaerocellum thermophilum) protein is Methylglyoxal synthase.